Here is a 410-residue protein sequence, read N- to C-terminus: Cysteine desulfurase IscS (410 aa).

Pyridoxal 5'-phosphate contacts are provided by residues Ala-80–Thr-81, Asn-160, Gln-188, and Ser-208–His-210. An N6-(pyridoxal phosphate)lysine modification is found at Lys-211. Thr-248 provides a ligand contact to pyridoxal 5'-phosphate. The Cysteine persulfide intermediate role is filled by Cys-334. Cys-334 is a [2Fe-2S] cluster binding site.

This sequence belongs to the class-V pyridoxal-phosphate-dependent aminotransferase family. NifS/IscS subfamily. As to quaternary structure, homodimer. Forms a heterotetramer with IscU, interacts with other sulfur acceptors. Pyridoxal 5'-phosphate is required as a cofactor.

The protein localises to the cytoplasm. It carries out the reaction (sulfur carrier)-H + L-cysteine = (sulfur carrier)-SH + L-alanine. It participates in cofactor biosynthesis; iron-sulfur cluster biosynthesis. Master enzyme that delivers sulfur to a number of partners involved in Fe-S cluster assembly, tRNA modification or cofactor biosynthesis. Catalyzes the removal of elemental sulfur atoms from cysteine to produce alanine. Functions as a sulfur delivery protein for Fe-S cluster synthesis onto IscU, an Fe-S scaffold assembly protein, as well as other S acceptor proteins. The sequence is that of Cysteine desulfurase IscS from Rickettsia prowazekii (strain Madrid E).